Reading from the N-terminus, the 354-residue chain is DNA polymerase IV (354 aa).

Residues 6 to 187 form the UmuC domain; sequence IIHIDCDCFY…LPVARLHGVG (182 aa). Mg(2+)-binding residues include D10 and D105. E106 is an active-site residue.

It belongs to the DNA polymerase type-Y family. In terms of assembly, monomer. Mg(2+) is required as a cofactor.

Its subcellular location is the cytoplasm. The catalysed reaction is DNA(n) + a 2'-deoxyribonucleoside 5'-triphosphate = DNA(n+1) + diphosphate. In terms of biological role, poorly processive, error-prone DNA polymerase involved in untargeted mutagenesis. Copies undamaged DNA at stalled replication forks, which arise in vivo from mismatched or misaligned primer ends. These misaligned primers can be extended by PolIV. Exhibits no 3'-5' exonuclease (proofreading) activity. May be involved in translesional synthesis, in conjunction with the beta clamp from PolIII. This Pseudomonas entomophila (strain L48) protein is DNA polymerase IV.